A 99-amino-acid polypeptide reads, in one-letter code: Large ribosomal subunit protein uL23 (99 aa).

This sequence belongs to the universal ribosomal protein uL23 family. In terms of assembly, part of the 50S ribosomal subunit. Contacts protein L29, and trigger factor when it is bound to the ribosome.

In terms of biological role, one of the early assembly proteins it binds 23S rRNA. One of the proteins that surrounds the polypeptide exit tunnel on the outside of the ribosome. Forms the main docking site for trigger factor binding to the ribosome. The protein is Large ribosomal subunit protein uL23 of Hydrogenobaculum sp. (strain Y04AAS1).